The chain runs to 394 residues: Phosphopentomutase (394 aa).

The Mn(2+) site is built by Asp-14, Asp-287, His-292, Asp-328, His-329, and His-340.

This sequence belongs to the phosphopentomutase family. Mn(2+) is required as a cofactor.

It is found in the cytoplasm. The enzyme catalyses 2-deoxy-alpha-D-ribose 1-phosphate = 2-deoxy-D-ribose 5-phosphate. The catalysed reaction is alpha-D-ribose 1-phosphate = D-ribose 5-phosphate. The protein operates within carbohydrate degradation; 2-deoxy-D-ribose 1-phosphate degradation; D-glyceraldehyde 3-phosphate and acetaldehyde from 2-deoxy-alpha-D-ribose 1-phosphate: step 1/2. Its function is as follows. Isomerase that catalyzes the conversion of deoxy-ribose 1-phosphate (dRib-1-P) and ribose 1-phosphate (Rib-1-P) to deoxy-ribose 5-phosphate (dRib-5-P) and ribose 5-phosphate (Rib-5-P), respectively. In Listeria monocytogenes serotype 4a (strain HCC23), this protein is Phosphopentomutase.